The primary structure comprises 225 residues: Putative elongation factor 1 gamma homolog (225 aa).

The GST C-terminal domain maps to 94-225 (DFKTRADILR…MCETEMQPIK (132 aa)).

In Saccharomyces cerevisiae (strain ATCC 204508 / S288c) (Baker's yeast), this protein is Putative elongation factor 1 gamma homolog.